Consider the following 439-residue polypeptide: Ribosomal protein uS12 methylthiotransferase RimO (439 aa).

The MTTase N-terminal domain occupies 3-115 (NKLHIVSLGC…IDELLVEKKS (113 aa)). The [4Fe-4S] cluster site is built by Cys12, Cys46, Cys78, Cys146, Cys150, and Cys153. The Radical SAM core domain occupies 132-361 (TGSTYHAYIK…GKIAADVMQA (230 aa)).

The protein belongs to the methylthiotransferase family. RimO subfamily. The cofactor is [4Fe-4S] cluster.

The protein resides in the cytoplasm. The catalysed reaction is L-aspartate(89)-[ribosomal protein uS12]-hydrogen + (sulfur carrier)-SH + AH2 + 2 S-adenosyl-L-methionine = 3-methylsulfanyl-L-aspartate(89)-[ribosomal protein uS12]-hydrogen + (sulfur carrier)-H + 5'-deoxyadenosine + L-methionine + A + S-adenosyl-L-homocysteine + 2 H(+). Catalyzes the methylthiolation of an aspartic acid residue of ribosomal protein uS12. In Sulfurimonas denitrificans (strain ATCC 33889 / DSM 1251) (Thiomicrospira denitrificans (strain ATCC 33889 / DSM 1251)), this protein is Ribosomal protein uS12 methylthiotransferase RimO.